Here is a 143-residue protein sequence, read N- to C-terminus: MITPTVKMRILSSSHLFYLALCLLTFTSSATAGPETLCGAELVDALQFVCGDRGFYFNKPTGYGSSSRRAPQTGIVDECCFRSCDLRRLEMYCAPLKPAKAARSVRAQRHTDMPKTQKYQPPSTNKKMKSQRRRKGSTFEEHK.

The signal sequence occupies residues 1–32 (MITPTVKMRILSSSHLFYLALCLLTFTSSATA). Positions 33-61 (GPETLCGAELVDALQFVCGDRGFYFNKPT) are b. 3 cysteine pairs are disulfide-bonded: Cys-38-Cys-80, Cys-50-Cys-93, and Cys-79-Cys-84. The c stretch occupies residues 62 to 73 (GYGSSSRRAPQT). The a stretch occupies residues 74–94 (GIVDECCFRSCDLRRLEMYCA). Positions 95–102 (PLKPAKAA) are d. Residues 99-143 (AKAARSVRAQRHTDMPKTQKYQPPSTNKKMKSQRRRKGSTFEEHK) form a disordered region. A propeptide spans 103 to 143 (RSVRAQRHTDMPKTQKYQPPSTNKKMKSQRRRKGSTFEEHK) (e peptide). A compositionally biased stretch (basic residues) spans 126–136 (KKMKSQRRRKG).

The protein belongs to the insulin family. In terms of assembly, forms a ternary complex with IGFR1 and ITGAV:ITGB3. Forms a ternary complex with IGFR1 and ITGA6:ITGB4. Forms a ternary complex with IGFBP3 and ALS.

Its subcellular location is the secreted. Its function is as follows. The insulin-like growth factors, isolated from plasma, are structurally and functionally related to insulin but have a much higher growth-promoting activity. May be a physiological regulator of [1-14C]-2-deoxy-D-glucose (2DG) transport and glycogen synthesis in osteoblasts. Stimulates glucose transport in bone-derived osteoblastic (PyMS) cells and is effective at much lower concentrations than insulin, not only regarding glycogen and DNA synthesis but also with regard to enhancing glucose uptake. May play a role in synapse maturation. Ca(2+)-dependent exocytosis of IGF1 is required for sensory perception of smell in the olfactory bulb. Acts as a ligand for IGF1R. Binds to the alpha subunit of IGF1R, leading to the activation of the intrinsic tyrosine kinase activity which autophosphorylates tyrosine residues in the beta subunit thus initiating a cascade of down-stream signaling events leading to activation of the PI3K-AKT/PKB and the Ras-MAPK pathways. Binds to integrins ITGAV:ITGB3 and ITGA6:ITGB4. Its binding to integrins and subsequent ternary complex formation with integrins and IGFR1 are essential for IGF1 signaling. Induces the phosphorylation and activation of IGFR1, MAPK3/ERK1, MAPK1/ERK2 and AKT1. As part of the MAPK/ERK signaling pathway, acts as a negative regulator of apoptosis in cardiomyocytes via promotion of STUB1/CHIP-mediated ubiquitination and degradation of ICER-type isoforms of CREM. The polypeptide is Insulin-like growth factor 1 (Oryctolagus cuniculus (Rabbit)).